The following is a 272-amino-acid chain: Prohibitin 1 (272 aa).

N-acetylalanine is present on alanine 2. Threonine 91 bears the Phosphothreonine mark. 2 positions are modified to N6-acetyllysine: lysine 128 and lysine 186. A coiled-coil region spans residues lysine 177 to isoleucine 211. At lysine 202 the chain carries N6-acetyllysine; alternate. An N6-succinyllysine; alternate modification is found at lysine 202. Tyrosine 249 is modified (phosphotyrosine).

Belongs to the prohibitin family. In terms of assembly, interacts with PHB2. Interacts with STOML2. Interacts with CD86 (via cytoplasmic domain); the interactions increases after priming with CD40. As to quaternary structure, (Microbial infection) Interacts with human enterovirus 71/EV-71 capsid protein VP0, protein 3CD and protease 3C. As to expression, widely expressed in different tissues.

It localises to the mitochondrion inner membrane. It is found in the nucleus. The protein resides in the cell membrane. The protein localises to the cytoplasm. Target of the anti-cancer drug Rocaglamide (Roc-A). Protein with pleiotropic attributes mediated in a cell-compartment- and tissue-specific manner, which include the plasma membrane-associated cell signaling functions, mitochondrial chaperone, and transcriptional co-regulator of transcription factors in the nucleus. Plays a role in adipose tissue and glucose homeostasis in a sex-specific manner. Contributes to pulmonary vascular remodeling by accelerating proliferation of pulmonary arterial smooth muscle cells. In terms of biological role, in the mitochondria, together with PHB2, forms large ring complexes (prohibitin complexes) in the inner mitochondrial membrane (IMM) and functions as a chaperone protein that stabilizes mitochondrial respiratory enzymes and maintains mitochondrial integrity in the IMM, which is required for mitochondrial morphogenesis, neuronal survival, and normal lifespan. The prohibitin complex, with DNAJC19, regulates cardiolipin remodeling and the protein turnover of OMA1 in a cardiolipin-binding manner. Regulates mitochondrial respiration activity playing a role in cellular aging. The prohibitin complex plays a role of mitophagy receptor involved in targeting mitochondria for autophagic degradation. Involved in mitochondrial-mediated antiviral innate immunity, activates RIG-I-mediated signal transduction and production of IFNB1 and pro-inflammatory cytokine IL6. Functionally, in the nucleus, acts as a transcription coregulator, enhances promoter binding by TP53, a transcription factor it activates, but reduces the promoter binding by E2F1, a transcription factor it represses. Interacts with STAT3 to affect IL17 secretion in T-helper Th17 cells. Its function is as follows. In the plasma membrane, cooperates with CD86 to mediate CD86-signaling in B lymphocytes that regulates the level of IgG1 produced through the activation of distal signaling intermediates. Upon CD40 engagement, required to activate NF-kappa-B signaling pathway via phospholipase C and protein kinase C activation. (Microbial infection) In neuronal cells, cell surface-expressed PHB1 is involved in human enterovirus 71/EV-71 entry into neuronal cells specifically, while membrane-bound mitochondrial PHB1 associates with the virus replication complex and facilitates viral replication. May serve as a receptor for EV71. This chain is Prohibitin 1 (Phb1), found in Mus musculus (Mouse).